A 116-amino-acid polypeptide reads, in one-letter code: Ribosome-binding factor A (116 aa).

Belongs to the RbfA family. As to quaternary structure, monomer. Binds 30S ribosomal subunits, but not 50S ribosomal subunits or 70S ribosomes.

The protein localises to the cytoplasm. Its function is as follows. One of several proteins that assist in the late maturation steps of the functional core of the 30S ribosomal subunit. Associates with free 30S ribosomal subunits (but not with 30S subunits that are part of 70S ribosomes or polysomes). Required for efficient processing of 16S rRNA. May interact with the 5'-terminal helix region of 16S rRNA. In Levilactobacillus brevis (strain ATCC 367 / BCRC 12310 / CIP 105137 / JCM 1170 / LMG 11437 / NCIMB 947 / NCTC 947) (Lactobacillus brevis), this protein is Ribosome-binding factor A.